The following is a 203-amino-acid chain: Large ribosomal subunit protein uL22 (203 aa).

A compositionally biased stretch (polar residues) spans 138-167; that stretch reads PENTQSGALSQQSQAEQPQNDPENGVDSQL. Positions 138 to 203 are disordered; it reads PENTQSGALS…TVLAQEKEVK (66 aa). Over residues 168–177 the composition is skewed to low complexity; that stretch reads SAKTNSTTTA. Positions 183 to 196 are enriched in polar residues; sequence ADNSTKNDATNTVL.

The protein belongs to the universal ribosomal protein uL22 family. In terms of assembly, part of the 50S ribosomal subunit.

In terms of biological role, this protein binds specifically to 23S rRNA; its binding is stimulated by other ribosomal proteins, e.g. L4, L17, and L20. It is important during the early stages of 50S assembly. It makes multiple contacts with different domains of the 23S rRNA in the assembled 50S subunit and ribosome. Functionally, the globular domain of the protein is located near the polypeptide exit tunnel on the outside of the subunit, while an extended beta-hairpin is found that lines the wall of the exit tunnel in the center of the 70S ribosome. The polypeptide is Large ribosomal subunit protein uL22 (Mesomycoplasma hyopneumoniae (strain 7448) (Mycoplasma hyopneumoniae)).